Reading from the N-terminus, the 331-residue chain is (E)-beta farnesene synthase MBR_03882 (331 aa).

Belongs to the trichodiene synthase family.

It catalyses the reaction (2E,6E)-farnesyl diphosphate = (E)-beta-farnesene + diphosphate. In terms of biological role, terpene synthase that catalyzes the conversion of (2E,6E)-farnesyl diphosphate (FPP) into the volatile sesquiterpene (E)-beta-farnesene. This Metarhizium brunneum (strain ARSEF 3297) protein is (E)-beta farnesene synthase MBR_03882.